Reading from the N-terminus, the 138-residue chain is Large ribosomal subunit protein uL16 (138 aa).

Belongs to the universal ribosomal protein uL16 family. As to quaternary structure, part of the 50S ribosomal subunit.

In terms of biological role, binds 23S rRNA and is also seen to make contacts with the A and possibly P site tRNAs. This is Large ribosomal subunit protein uL16 from Anaeromyxobacter dehalogenans (strain 2CP-1 / ATCC BAA-258).